Reading from the N-terminus, the 208-residue chain is dITP/XTP pyrophosphatase (208 aa).

Position 7 to 12 (7 to 12 (SNNAKK)) interacts with substrate. 2 residues coordinate Mg(2+): glutamate 39 and aspartate 68. Aspartate 68 functions as the Proton acceptor in the catalytic mechanism. Residues serine 69, 162–165 (FGYD), lysine 185, and 190–191 (HR) each bind substrate.

Belongs to the HAM1 NTPase family. In terms of assembly, homodimer. It depends on Mg(2+) as a cofactor.

It carries out the reaction XTP + H2O = XMP + diphosphate + H(+). It catalyses the reaction dITP + H2O = dIMP + diphosphate + H(+). The catalysed reaction is ITP + H2O = IMP + diphosphate + H(+). In terms of biological role, pyrophosphatase that catalyzes the hydrolysis of nucleoside triphosphates to their monophosphate derivatives, with a high preference for the non-canonical purine nucleotides XTP (xanthosine triphosphate), dITP (deoxyinosine triphosphate) and ITP. Seems to function as a house-cleaning enzyme that removes non-canonical purine nucleotides from the nucleotide pool, thus preventing their incorporation into DNA/RNA and avoiding chromosomal lesions. The protein is dITP/XTP pyrophosphatase of Methylibium petroleiphilum (strain ATCC BAA-1232 / LMG 22953 / PM1).